A 568-amino-acid polypeptide reads, in one-letter code: Adenine deaminase (568 aa).

The protein belongs to the metallo-dependent hydrolases superfamily. Adenine deaminase family. The cofactor is Mn(2+).

It catalyses the reaction adenine + H2O + H(+) = hypoxanthine + NH4(+). The polypeptide is Adenine deaminase (Clostridium perfringens (strain ATCC 13124 / DSM 756 / JCM 1290 / NCIMB 6125 / NCTC 8237 / Type A)).